The following is a 246-amino-acid chain: Homeobox protein Crxos (246 aa).

2 DNA-binding regions (homeobox) span residues 22–72 and 129–182; these read WEQL…EMRP and ELTD…RGYR. Residues 163–177 carry the Nuclear localization signal motif; the sequence is RKDLIRSWFITQRHR.

It belongs to the paired homeobox family. Specifically expressed during the preimplantation stages of embryonic development, between the four-cell to eight-cell stage and the morula stage. Expressed in adult testis. As to expression, detected in early embryos; expression decreases gradually with embryonic development. Also expressed in extraembryonic tissues after E14.5, expression level increases drastically until E18.5, immediately before partum.

It is found in the nucleus. Its function is as follows. Transcription factor that acts as a regulator of embryonic stem cell differentiation during the preimplantation stages of embryonic development. In terms of biological role, transcription factor that acts as a positive regulator of embryonic stem cell differentiation. Functionally, transcription factor that promotes embryonic stem cell pluripotency. Transcription factor that promotes embryonic stem cell pluripotency. Also involved in extraembryonic tissues development by promoting the expression of placental prolactin family genes. The chain is Homeobox protein Crxos from Mus musculus (Mouse).